The following is a 231-amino-acid chain: Putative S-adenosylmethionine-dependent methyltransferase RcsF (231 aa).

A TsaA-like domain is found at 5–142 (VSPIGYIRSC…YVPYADAVAD (138 aa)). Residues 22 to 24 (PRQ), 63 to 64 (HQ), arginine 91, and 122 to 125 (LDGT) contribute to the S-adenosyl-L-methionine site.

The protein belongs to the tRNA methyltransferase O family.

The protein is Putative S-adenosylmethionine-dependent methyltransferase RcsF (rcsF) of Pseudomonas aeruginosa (strain ATCC 15692 / DSM 22644 / CIP 104116 / JCM 14847 / LMG 12228 / 1C / PRS 101 / PAO1).